Reading from the N-terminus, the 498-residue chain is Interferon regulatory factor 5 (498 aa).

A Phosphothreonine modification is found at Thr10. The Nuclear localization signal signature appears at 12 to 18 (PRRVRLK). Positions 14–122 (RVRLKPWLVA…QPYKIYEVCS (109 aa)) form a DNA-binding region, IRF tryptophan pentad repeat. A disordered region spans residues 121 to 207 (CSNGPAPTDS…SPLAPPPGNP (87 aa)). A Nuclear export signal motif is present at residues 150–160 (LQRMLPSLSLT). At Ser158 the chain carries Phosphoserine; by TBK1. Residues 168–206 (TLQPPTLRPPTLQPPTLQPPVVLGPPAPDPSPLAPPPGN) are compositionally biased toward pro residues. Ser293 bears the Phosphoserine; by TBK1 mark. Ser301 carries the post-translational modification Phosphoserine. Glycyl lysine isopeptide (Lys-Gly) (interchain with G-Cter in ubiquitin) cross-links involve residues Lys411 and Lys412. Phosphoserine occurs at positions 431, 435, 437, and 440. Ser446 is modified (phosphoserine; by IKKB). A disordered region spans residues 478 to 498 (PPGAGLGVGQGPWPMHPAGMQ).

This sequence belongs to the IRF family. As to quaternary structure, homodimer, when phosphorylated. Interacts with TASL (via pLxIS motif); interaction takes place downstream of TLR7, TLR8 or TLR9, leading to its activation. Interacts with MYD88 and TRAF6. In terms of processing, phosphorylation of serine and threonine residues by IKBKB in a C-terminal autoinhibitory region, stimulates dimerization, transport into the nucleus, assembly with the coactivator CBP/EP300 and initiation of transcription. Post-translationally, 'Lys-63'-linked polyubiquitination by TRAF6 is required for activation.

It localises to the cytoplasm. It is found in the nucleus. Its activity is regulated as follows. Maintained as a monomer in an autoinhibited state. Phosphorylation and activation follow the following steps: innate adapter protein TASL recruits IRF5, thereby licensing IRF5 for phosphorylation by IKBKB. Phosphorylated IRF5 dissociates from the adapter proteins, dimerizes, and then enters the nucleus to induce IFNs. With respect to regulation, (Microbial infection) Activated upon coronavirus SARS-CoV-2 infection. Its function is as follows. Transcription factor that plays a critical role in innate immunity by activating expression of type I interferon (IFN) IFNA and INFB and inflammatory cytokines downstream of endolysosomal toll-like receptors TLR7, TLR8 and TLR9. Regulates the transcription of type I IFN genes (IFN-alpha and IFN-beta) and IFN-stimulated genes (ISG) by binding to an interferon-stimulated response element (ISRE) in their promoters. Can efficiently activate both the IFN-beta (IFNB) and the IFN-alpha (IFNA) genes and mediate their induction downstream of the TLR-activated, MyD88-dependent pathway. Key transcription factor regulating the IFN response during SARS-CoV-2 infection. In Homo sapiens (Human), this protein is Interferon regulatory factor 5.